Consider the following 152-residue polypeptide: Transcriptional regulator MraZ (152 aa).

2 consecutive SpoVT-AbrB domains span residues 5-52 and 81-124; these read ATLV…PLPE and ASEC…DETT.

This sequence belongs to the MraZ family. As to quaternary structure, forms oligomers.

It is found in the cytoplasm. It localises to the nucleoid. Functionally, negatively regulates its own expression and that of the subsequent genes in the proximal part of the division and cell wall (dcw) gene cluster. Acts by binding directly to DNA. May also regulate the expression of genes outside the dcw cluster. The protein is Transcriptional regulator MraZ of Escherichia coli O45:K1 (strain S88 / ExPEC).